Consider the following 166-residue polypeptide: Endoribonuclease YbeY (166 aa).

Zn(2+) is bound by residues H126, H130, and H136.

This sequence belongs to the endoribonuclease YbeY family. The cofactor is Zn(2+).

It is found in the cytoplasm. Single strand-specific metallo-endoribonuclease involved in late-stage 70S ribosome quality control and in maturation of the 3' terminus of the 16S rRNA. The sequence is that of Endoribonuclease YbeY from Laribacter hongkongensis (strain HLHK9).